The sequence spans 147 residues: Hemoglobin subunit beta-2 (147 aa).

One can recognise a Globin domain in the interval 3–147; the sequence is EWTDEERTII…VVSALGRQYH (145 aa). Heme b contacts are provided by H64 and H93.

It belongs to the globin family. As to quaternary structure, hb 2 is a heterotetramer of two alpha-2 and two beta-2 chains. Hb 3 is a heterotetramer of two alpha-1 and two beta-2 chains. As to expression, red blood cells.

Functionally, involved in oxygen transport from gills to the various peripheral tissues. This is Hemoglobin subunit beta-2 (hbb2) from Gadus morhua (Atlantic cod).